The following is a 277-amino-acid chain: Urease accessory protein UreD (277 aa).

Positions 1-20 are disordered; it reads MRQTAQEDASPAPMQRAHGT.

This sequence belongs to the UreD family. UreD, UreF and UreG form a complex that acts as a GTP-hydrolysis-dependent molecular chaperone, activating the urease apoprotein by helping to assemble the nickel containing metallocenter of UreC. The UreE protein probably delivers the nickel.

It localises to the cytoplasm. Required for maturation of urease via the functional incorporation of the urease nickel metallocenter. This Chelativorans sp. (strain BNC1) protein is Urease accessory protein UreD.